A 326-amino-acid chain; its full sequence is DNA-directed RNA polymerase subunit alpha (326 aa).

The segment at 1–231 (MQSNALLKPR…DQLSVFADLE (231 aa)) is alpha N-terminal domain (alpha-NTD). The segment at 245 to 326 (IDPVLLRPVD…WPPAGLEKLG (82 aa)) is alpha C-terminal domain (alpha-CTD).

Belongs to the RNA polymerase alpha chain family. In terms of assembly, homodimer. The RNAP catalytic core consists of 2 alpha, 1 beta, 1 beta' and 1 omega subunit. When a sigma factor is associated with the core the holoenzyme is formed, which can initiate transcription.

The enzyme catalyses RNA(n) + a ribonucleoside 5'-triphosphate = RNA(n+1) + diphosphate. DNA-dependent RNA polymerase catalyzes the transcription of DNA into RNA using the four ribonucleoside triphosphates as substrates. The protein is DNA-directed RNA polymerase subunit alpha of Azoarcus sp. (strain BH72).